Consider the following 47-residue polypeptide: Defensin-like protein 2 (47 aa).

Intrachain disulfides connect Cys3–Cys47, Cys14–Cys36, Cys20–Cys41, and Cys24–Cys43.

The protein belongs to the DEFL family.

The sequence is that of Defensin-like protein 2 from Zea mays (Maize).